A 253-amino-acid polypeptide reads, in one-letter code: Prolactin-7A2 (253 aa).

Residues 1-30 (MSFSFSQPCPSGALLLVVVSSLLLWENVAS) form the signal peptide. 3 N-linked (GlcNAc...) asparagine glycosylation sites follow: Asn36, Asn103, and Asn135. Intrachain disulfides connect Cys101/Cys218 and Cys235/Cys244.

The protein belongs to the somatotropin/prolactin family. As to expression, expression restricted to the placental tissue. Expressed only in the spongiotrophoblasts.

It localises to the secreted. The protein is Prolactin-7A2 (Prl7a2) of Mus musculus (Mouse).